Consider the following 317-residue polypeptide: MPKTIAFKHDTVLLHETVDMLEVKPNGIYVDATLGGAGHSEYLLSKLTTGHLYSFDQDETAHANAKVRLSEQLAEDKVTLIKSNFRNLKSALAELDITKIDGILYDLGVSSPQFDDSQRGFSYKKEARLDMRMDQSQTLSAYEVVNDYPYEALVRIFFRYGEDKFSKQIARKIEQSRKIKPIETTIELADLIKSALPQKELKKKGHPAKRIFQAIRIEVNDELGAAEESIEQAIDLLKVDGRISVITFHSLEDRLTKSIFKEYSTVNVPKGLPMLPKEMEAKLKLINRKPVLASEEELEFNNRAHSAKLRVAQKQRD.

S-adenosyl-L-methionine is bound by residues 37-39 (AGH), aspartate 56, phenylalanine 85, aspartate 106, and glutamine 113.

The protein belongs to the methyltransferase superfamily. RsmH family.

The protein resides in the cytoplasm. It carries out the reaction cytidine(1402) in 16S rRNA + S-adenosyl-L-methionine = N(4)-methylcytidine(1402) in 16S rRNA + S-adenosyl-L-homocysteine + H(+). Specifically methylates the N4 position of cytidine in position 1402 (C1402) of 16S rRNA. The chain is Ribosomal RNA small subunit methyltransferase H from Lactococcus lactis subsp. cremoris (strain SK11).